Here is an 86-residue protein sequence, read N- to C-terminus: Putative antitoxin VapB5 (86 aa).

Belongs to the phD/YefM antitoxin family. Forms a complex with VapC5.

Probable antitoxin component of a probable type II toxin-antitoxin (TA) system. The cognate toxin is VapC5. In Mycobacterium tuberculosis (strain CDC 1551 / Oshkosh), this protein is Putative antitoxin VapB5 (vapB5).